The chain runs to 191 residues: A-type ATP synthase subunit E (191 aa).

The protein belongs to the V-ATPase E subunit family. As to quaternary structure, has multiple subunits with at least A(3), B(3), C, D, E, F, H, I and proteolipid K(x).

The protein resides in the cell membrane. Component of the A-type ATP synthase that produces ATP from ADP in the presence of a proton gradient across the membrane. In Methanoregula boonei (strain DSM 21154 / JCM 14090 / 6A8), this protein is A-type ATP synthase subunit E.